The following is a 178-amino-acid chain: MLWVLVGAVLPVMLLAAPPPINKLALFPDKSAWCEAKNITQIVGHSGCEAKSIQNRACLGQCFSYSVPNTFPQSTESLVHCDSCMPAQSMWEIVTLECPGHEEVPRVDKLVEKIVHCSCQACGKEPSHEGLNVYVQGEDSPGSQPGPHSHAHPHPGGQTPEPEEPPGAPQVEEEGAED.

Positions 1 to 16 are cleaved as a signal peptide; the sequence is MLWVLVGAVLPVMLLA. 5 disulfide bridges follow: cysteine 34–cysteine 84, cysteine 48–cysteine 98, cysteine 58–cysteine 117, cysteine 62–cysteine 119, and cysteine 81–cysteine 122. A CTCK domain is found at 34–123; that stretch reads CEAKNITQIV…IVHCSCQACG (90 aa). Positions 132–178 are disordered; that stretch reads NVYVQGEDSPGSQPGPHSHAHPHPGGQTPEPEEPPGAPQVEEEGAED. Low complexity predominate over residues 140 to 160; the sequence is SPGSQPGPHSHAHPHPGGQTP.

Belongs to the DAN family. In terms of assembly, homodimer.

Its subcellular location is the secreted. Functionally, possible candidate as a tumor suppressor gene of neuroblastoma. May play an important role in preventing cells from entering the final stage (G1/S) of the transformation process. This is Neuroblastoma suppressor of tumorigenicity 1 (Nbl1) from Mus musculus (Mouse).